Here is a 658-residue protein sequence, read N- to C-terminus: Integrator complex subunit 9 (658 aa).

2 residues coordinate 1D-myo-inositol hexakisphosphate: lysine 2 and phenylalanine 19. Lysine 58 participates in a covalent cross-link: Glycyl lysine isopeptide (Lys-Gly) (interchain with G-Cter in SUMO2). Residues lysine 510 and arginine 511 each contribute to the 1D-myo-inositol hexakisphosphate site. The segment at 548–574 (DNKHLLQPPPRPAQPTSGKKRKRVSDD) is disordered. A Nuclear localization signal motif is present at residues 566–570 (KKRKR).

It belongs to the metallo-beta-lactamase superfamily. RNA-metabolizing metallo-beta-lactamase-like family. INTS9 subfamily. Component of the Integrator complex, composed of core subunits INTS1, INTS2, INTS3, INTS4, INTS5, INTS6, INTS7, INTS8, INTS9/RC74, INTS10, INTS11/CPSF3L, INTS12, INTS13, INTS14 and INTS15. The core complex associates with protein phosphatase 2A subunits PPP2CA and PPP2R1A, to form the Integrator-PP2A (INTAC) complex. INTS9 is part of the RNA endonuclease subcomplex, composed of INTS4, INTS9, INTS11 and inositol hexakisphosphate (InsP6). Interacts with WDR73; interaction is required for the assembly of the RNA endonuclease subcomplex in the cytoplasm. Interacts with BRAT1; interaction is required for the assembly of the RNA endonuclease subcomplex. Interacts with ESRRB, ESRRB is not a core component of the Integrator complex and this association is a bridge for the interaction with the multiprotein complex Integrator; attracts the transcriptional machinery.

Its subcellular location is the nucleus. The protein localises to the cytoplasm. In terms of biological role, component of the integrator complex, a multiprotein complex that terminates RNA polymerase II (Pol II) transcription in the promoter-proximal region of genes. The integrator complex provides a quality checkpoint during transcription elongation by driving premature transcription termination of transcripts that are unfavorably configured for transcriptional elongation: the complex terminates transcription by (1) catalyzing dephosphorylation of the C-terminal domain (CTD) of Pol II subunit POLR2A/RPB1 and SUPT5H/SPT5, (2) degrading the exiting nascent RNA transcript via endonuclease activity and (3) promoting the release of Pol II from bound DNA. The integrator complex is also involved in terminating the synthesis of non-coding Pol II transcripts, such as enhancer RNAs (eRNAs), small nuclear RNAs (snRNAs), telomerase RNAs and long non-coding RNAs (lncRNAs). Mediates recruitment of cytoplasmic dynein to the nuclear envelope, probably as component of the integrator complex. In Homo sapiens (Human), this protein is Integrator complex subunit 9.